The following is a 56-amino-acid chain: Ovomucoid (56 aa).

In terms of domain architecture, Kazal-like spans 6–56 (VDCSEYPKPECTAEERPICGSDNKTYGNKCNFCNAVVESNGTLTLRNFGKC). 3 disulfides stabilise this stretch: Cys-8-Cys-38, Cys-16-Cys-35, and Cys-24-Cys-56. A glycan (N-linked (GlcNAc...) asparagine) is linked at Asn-45.

It is found in the secreted. The chain is Ovomucoid from Bambusicola thoracicus (Chinese bamboo-partridge).